We begin with the raw amino-acid sequence, 1153 residues long: Tyrosine-protein kinase JAK1 (1153 aa).

Positions 32–416 constitute an FERM domain; it reads KGLEIHFYLA…GYFRLTVDAH (385 aa). Positions 435 to 540 constitute an SH2; atypical domain; sequence GCHGPICTEY…NLRFQLRRCC (106 aa). 2 Protein kinase domains span residues 580-846 and 872-1150; these read IVQG…DIVM and LKKI…QQML. ATP contacts are provided by residues 878–886 and K905; that span reads LGEGHFGKV. The active-site Proton acceptor is the D1000. Phosphotyrosine; by autocatalysis is present on residues Y1031 and Y1032.

Belongs to the protein kinase superfamily. Tyr protein kinase family. JAK subfamily. The cofactor is Mg(2+).

The protein localises to the endomembrane system. It carries out the reaction L-tyrosyl-[protein] + ATP = O-phospho-L-tyrosyl-[protein] + ADP + H(+). Its function is as follows. Tyrosine kinase of the non-receptor type, involved in the IFN-alpha/beta/gamma signal pathway. Appears to be required in early development for specific cell migrations (epiboly), expression of homeobox protein goosecoid and formation of anterior structures. The protein is Tyrosine-protein kinase JAK1 (jak1) of Danio rerio (Zebrafish).